The chain runs to 203 residues: tRNA (pseudouridine(54)-N(1))-methyltransferase (203 aa).

Leucine 135 and glycine 156 together coordinate S-adenosyl-L-methionine.

This sequence belongs to the methyltransferase superfamily. TrmY family. As to quaternary structure, homodimer.

The protein resides in the cytoplasm. It catalyses the reaction pseudouridine(54) in tRNA + S-adenosyl-L-methionine = N(1)-methylpseudouridine(54) in tRNA + S-adenosyl-L-homocysteine + H(+). Specifically catalyzes the N1-methylation of pseudouridine at position 54 (Psi54) in tRNAs. In Thermococcus onnurineus (strain NA1), this protein is tRNA (pseudouridine(54)-N(1))-methyltransferase.